Consider the following 276-residue polypeptide: Phosducin-like protein 1 (276 aa).

A phosphoserine mark is found at Ser-18, Ser-19, Ser-20, and Ser-42. Positions 18–74 (SSSEGEDNGDEGGDNKGASGKSRCSGLTIDTNPDATPAGGFRQQSSTNTGPKGVVKD) are disordered. The Phosducin domain occupies 62-272 (SSTNTGPKGV…LIEHGIIVDR (211 aa)). Residues 153–276 (FGQVQQLTSH…GIIVDRALYN (124 aa)) form a thioredoxin fold region.

This sequence belongs to the phosducin family. Forms a complex with the beta and gamma subunits of the GTP-binding proteins. Interacts with the CCT chaperonin complex.

Its function is as follows. Functions as a co-chaperone for CCT in the assembly of heterotrimeric G protein complexes, facilitates the assembly of both Gbeta-Ggamma and RGS-Gbeta5 heterodimers. This Drosophila melanogaster (Fruit fly) protein is Phosducin-like protein 1.